Consider the following 209-residue polypeptide: MTQASAKFIVVEGLEGAGKSSAIALIRDFIEKHTGLAPVCTREPGGTPLAERIRDLVKIADPSDPLCDESECLLIYAARAQLVANVIKPALAEGKWVLGDRHNLSSLAYQGGGRGLMPLVEAVSNATLKGFKPDLTLYLDLDPKLGLLRAAKRGELDRIEQQAIDFFERARATYLKLASEDERIVVIDASQTMAEVHKDILAVLQAMAW.

13–20 (GLEGAGKS) is a binding site for ATP.

The protein belongs to the thymidylate kinase family.

It carries out the reaction dTMP + ATP = dTDP + ADP. In terms of biological role, phosphorylation of dTMP to form dTDP in both de novo and salvage pathways of dTTP synthesis. The sequence is that of Thymidylate kinase from Shewanella sp. (strain ANA-3).